Consider the following 468-residue polypeptide: Mitochondrial distribution and morphology protein 10 (468 aa).

Residues 370-386 (ERDGLPGIQRDDHDMHH) show a composition bias toward basic and acidic residues. The tract at residues 370 to 394 (ERDGLPGIQRDDHDMHHHPQRPHAS) is disordered.

It belongs to the MDM10 family. In terms of assembly, component of the ER-mitochondria encounter structure (ERMES) or MDM complex, composed of MMM1, MDM10, MDM12 and MDM34. Associates with the mitochondrial outer membrane sorting assembly machinery SAM(core) complex.

Its subcellular location is the mitochondrion outer membrane. Functionally, component of the ERMES/MDM complex, which serves as a molecular tether to connect the endoplasmic reticulum and mitochondria. Components of this complex are involved in the control of mitochondrial shape and protein biogenesis and may function in phospholipid exchange. MDM10 is involved in the late assembly steps of the general translocase of the mitochondrial outer membrane (TOM complex). Functions in the TOM40-specific route of the assembly of outer membrane beta-barrel proteins, including the association of TOM40 with the receptor TOM22 and small TOM proteins. Can associate with the SAM(core) complex as well as the MDM12-MMM1 complex, both involved in late steps of the major beta-barrel assembly pathway, that is responsible for biogenesis of all outer membrane beta-barrel proteins. May act as a switch that shuttles between both complexes and channels precursor proteins into the TOM40-specific pathway. Plays a role in mitochondrial morphology and in the inheritance of mitochondria. The protein is Mitochondrial distribution and morphology protein 10 of Ajellomyces dermatitidis (strain ER-3 / ATCC MYA-2586) (Blastomyces dermatitidis).